The sequence spans 1033 residues: Isoleucine--tRNA ligase 2 (1033 aa).

The 'HIGH' region motif lies at 47–57 (PTANGLPHVGH). The 'KMSKS' region signature appears at 590 to 594 (KMSKS). Lys-593 contributes to the ATP binding site.

This sequence belongs to the class-I aminoacyl-tRNA synthetase family. IleS type 2 subfamily. In terms of assembly, monomer. Requires Zn(2+) as cofactor.

It is found in the cytoplasm. It catalyses the reaction tRNA(Ile) + L-isoleucine + ATP = L-isoleucyl-tRNA(Ile) + AMP + diphosphate. Catalyzes the attachment of isoleucine to tRNA(Ile). As IleRS can inadvertently accommodate and process structurally similar amino acids such as valine, to avoid such errors it has two additional distinct tRNA(Ile)-dependent editing activities. One activity is designated as 'pretransfer' editing and involves the hydrolysis of activated Val-AMP. The other activity is designated 'posttransfer' editing and involves deacylation of mischarged Val-tRNA(Ile). The polypeptide is Isoleucine--tRNA ligase 2 (Bacillus anthracis).